The following is a 576-amino-acid chain: MKASKYILPTEKENPSDAVVASHRLMIRAGLARKSSAGLYFYLPLGLKILQKIKQIIREEMNKTGALEFDLPILTPSDFWEQSGRWTAMGKEMFRIKDRHDLSYALGPTHEESFSFLLKPLLKSYKDLPLNVYQIQTKFRDEIRPRFGVIRSREFIMKDAYSFHIDDVSLDETYQSMRAAYRKIFDRCGLKTIPVQADSGSMGGSASEEFMVVSPIGEETLLLCNSCGYSSNSEKTPLVLKKENVSSASVEKKEISTPGKKTIVEVSAFLGIPESTTIKAATLKSEKKKILVYLRGDLELNLHKLHSLLRIVDSEPMTDAEIRELGLVPGFIAPVAPNDKVKVLYDRSLQKDFPYVVASNKEDFHTQGFVLEKEVSGLPEFADVALAREGDLCPNCNAPLKAEKGIEVGHIFKLGEKYTKAFGIQVLDQNGKARTLTMGCYGIGVNRTMATVIEQRNDEKGIFWPISIAPFEVTLVSITKGEEQYSKAEEFYNVLKNENLEVFWDDRDVGPGFKLKDSELIGFPIRVTIGKKFFENGEISIYNRKADKEESFVFAGFENLIARVESLRQELFAELE.

It belongs to the class-II aminoacyl-tRNA synthetase family. ProS type 1 subfamily. Homodimer.

Its subcellular location is the cytoplasm. The enzyme catalyses tRNA(Pro) + L-proline + ATP = L-prolyl-tRNA(Pro) + AMP + diphosphate. Functionally, catalyzes the attachment of proline to tRNA(Pro) in a two-step reaction: proline is first activated by ATP to form Pro-AMP and then transferred to the acceptor end of tRNA(Pro). As ProRS can inadvertently accommodate and process non-cognate amino acids such as alanine and cysteine, to avoid such errors it has two additional distinct editing activities against alanine. One activity is designated as 'pretransfer' editing and involves the tRNA(Pro)-independent hydrolysis of activated Ala-AMP. The other activity is designated 'posttransfer' editing and involves deacylation of mischarged Ala-tRNA(Pro). The misacylated Cys-tRNA(Pro) is not edited by ProRS. The chain is Proline--tRNA ligase from Leptospira borgpetersenii serovar Hardjo-bovis (strain L550).